Consider the following 172-residue polypeptide: uncharacterized protein (172 aa).

This is an uncharacterized protein from Rattus norvegicus (Rat).